Consider the following 198-residue polypeptide: Penicillin-binding protein activator LpoB (198 aa).

The first 19 residues, 1–19, serve as a signal peptide directing secretion; that stretch reads MIRSVNRTGALMMALILSG. The N-palmitoyl cysteine moiety is linked to residue cysteine 20. Residue cysteine 20 is the site of S-diacylglycerol cysteine attachment. Over residues 26-37 the composition is skewed to low complexity; the sequence is QPAPVEPTQPVE. The disordered stretch occupies residues 26-59; it reads QPAPVEPTQPVEPVQPVPQPEQPIPQPQPVPQPP. Over residues 38–59 the composition is skewed to pro residues; the sequence is PVQPVPQPEQPIPQPQPVPQPP.

The protein belongs to the LpoB family. In terms of assembly, interacts with PBP1b.

It is found in the cell outer membrane. Its function is as follows. Regulator of peptidoglycan synthesis that is essential for the function of penicillin-binding protein 1B (PBP1b). The polypeptide is Penicillin-binding protein activator LpoB (Pantoea ananatis (strain LMG 20103)).